Here is a 610-residue protein sequence, read N- to C-terminus: MCGIVGAVAQRDITPILIEGLKRLEYRGYDSCGVALYMDGHLRRTRSTKRVAELSEQVAEDKLGGFTGIAHTRWATHGIPATYNAHPHFSAQGKDEPRIALVHNGIIENHEELRQELQGVGYVFESQTDTEVIAHLVNHLYAGDLFEAVQQAVRRLQGAYAIAVFCRDEPHRVVGARQGSPLVVGLGQNENFLASDALALAGTTDQIIYLEDGDVVDLQLARVWIVDQAGKQVERKAHTVQVHTGAAELGPYRHFMQKEIFEQPRAVGDTLQDIESITPELFGDGAYKVFKEIDSLLILACGTSYYAGLTAKYWIESIARIPVAVEIASEYRYRDSVPNPNALVVTISQSGETADTLAALKHVRSLGMQHTLTVCNVVTSAMVRECELAYITRAGVEIGVASTKAFTTQLTALFLLTLALAQTRGRLTEEQEAEHLKALRHLPAAIGAVLALEPQIMAWADRFASKENALFLGRGMHYPIALEGALKLKEISYIHAEAYPAGELKHGPLALVTEHMPVVTIAPKDALLEKLKSNMQEVRARGGELYVFADADSKIANAEGMHVIRMPEYYGALSPIVHTIPLQLLSYHTACVRGTDVDKPRNLAKSVTVE.

Cysteine 2 (nucleophile; for GATase activity) is an active-site residue. The Glutamine amidotransferase type-2 domain maps to 2–221; sequence CGIVGAVAQR…DGDVVDLQLA (220 aa). SIS domains lie at 286–426 and 459–600; these read AYKV…TRGR and WADR…VDKP. Lysine 605 (for Fru-6P isomerization activity) is an active-site residue.

As to quaternary structure, homodimer.

Its subcellular location is the cytoplasm. It catalyses the reaction D-fructose 6-phosphate + L-glutamine = D-glucosamine 6-phosphate + L-glutamate. In terms of biological role, catalyzes the first step in hexosamine metabolism, converting fructose-6P into glucosamine-6P using glutamine as a nitrogen source. This is Glutamine--fructose-6-phosphate aminotransferase [isomerizing] from Bordetella pertussis (strain Tohama I / ATCC BAA-589 / NCTC 13251).